Consider the following 177-residue polypeptide: Protein PrsK (177 aa).

The N-terminal stretch at 1–21 (MIKSTGALLLFAALSAGQAMA) is a signal peptide.

The protein localises to the fimbrium. The chain is Protein PrsK (prsK) from Escherichia coli.